Here is a 160-residue protein sequence, read N- to C-terminus: Small ribosomal subunit protein bS6 (160 aa).

Positions 100–160 are disordered; sequence PSSVLARKSD…DDARETAGAE (61 aa). 2 stretches are compositionally biased toward basic and acidic residues: residues 106–116 and 136–160; these read RKSDDRGDRGN and RSSE…AGAE.

Belongs to the bacterial ribosomal protein bS6 family.

In terms of biological role, binds together with bS18 to 16S ribosomal RNA. The sequence is that of Small ribosomal subunit protein bS6 from Gluconobacter oxydans (strain 621H) (Gluconobacter suboxydans).